The following is a 309-amino-acid chain: Uricase-2 isozyme 2 (309 aa).

Residues lysine 18 and threonine 64 each act as charge relay system in the active site. Urate is bound by residues threonine 64, aspartate 65, phenylalanine 166, arginine 183, valine 238, glutamine 239, and asparagine 265. Histidine 267 functions as the Charge relay system in the catalytic mechanism.

The protein belongs to the uricase family. Homotetramer.

The protein localises to the peroxisome. It carries out the reaction urate + O2 + H2O = 5-hydroxyisourate + H2O2. Its pathway is purine metabolism; urate degradation; (S)-allantoin from urate: step 1/3. Catalyzes the oxidation of uric acid to 5-hydroxyisourate, which is further processed to form (S)-allantoin. The polypeptide is Uricase-2 isozyme 2 (Glycine max (Soybean)).